A 505-amino-acid polypeptide reads, in one-letter code: Probable alpha-L-arabinofuranosidase C (505 aa).

N-linked (GlcNAc...) asparagine glycosylation is found at asparagine 152, asparagine 269, and asparagine 438.

The protein belongs to the glycosyl hydrolase 51 family.

It is found in the secreted. The enzyme catalyses Hydrolysis of terminal non-reducing alpha-L-arabinofuranoside residues in alpha-L-arabinosides.. Its pathway is glycan metabolism; L-arabinan degradation. Its function is as follows. Alpha-L-arabinofuranosidase involved in the degradation of arabinoxylan, a major component of plant hemicellulose. Acts only on small linear 1,5-alpha-linked L-arabinofuranosyl oligosaccharides. This Aspergillus clavatus (strain ATCC 1007 / CBS 513.65 / DSM 816 / NCTC 3887 / NRRL 1 / QM 1276 / 107) protein is Probable alpha-L-arabinofuranosidase C (abfC).